Consider the following 165-residue polypeptide: Ubiquitin-conjugating enzyme E2 G2 (165 aa).

N-acetylalanine is present on Ala2. Residues 4-164 (TALKRLMAEY…AKQIVQKSLG (161 aa)) form the UBC core domain. Cys89 serves as the catalytic Glycyl thioester intermediate.

This sequence belongs to the ubiquitin-conjugating enzyme family. In terms of assembly, interacts with AUP1 (via C-terminus); the interaction recruits UBE2G2 to lipid droplets. Interacts with ubiquitin ligases AMFR/gp78 and RNF139/TRC8; recruitment to lipid droplets by AUP1 facilitates interaction of UBE2G2 with AMFR and RNF139, leading to sterol-induced ubiquitination of 3-hydroxy-3-methylglutaryl coenzyme A reductase and its subsequent proteasomal degradation.

Its subcellular location is the endoplasmic reticulum. The protein resides in the lipid droplet. It carries out the reaction S-ubiquitinyl-[E1 ubiquitin-activating enzyme]-L-cysteine + [E2 ubiquitin-conjugating enzyme]-L-cysteine = [E1 ubiquitin-activating enzyme]-L-cysteine + S-ubiquitinyl-[E2 ubiquitin-conjugating enzyme]-L-cysteine.. It functions in the pathway protein modification; protein ubiquitination. Accepts ubiquitin from the E1 complex and catalyzes its covalent attachment to other proteins. In vitro catalyzes 'Lys-48'-linked polyubiquitination. Involved in endoplasmic reticulum-associated degradation (ERAD). Required for sterol-induced ubiquitination of 3-hydroxy-3-methylglutaryl coenzyme A reductase and its subsequent proteasomal degradation. This chain is Ubiquitin-conjugating enzyme E2 G2, found in Homo sapiens (Human).